Here is a 478-residue protein sequence, read N- to C-terminus: Ribulose bisphosphate carboxylase large chain (478 aa).

The propeptide occupies 1-2; sequence MS. Position 3 is an N-acetylproline (P3). An N6,N6,N6-trimethyllysine modification is found at K14. Substrate is bound by residues N123 and T173. The active-site Proton acceptor is K175. Position 177 (K177) interacts with substrate. Residues K201, D203, and E204 each coordinate Mg(2+). Position 201 is an N6-carboxylysine (K201). The active-site Proton acceptor is H294. Substrate contacts are provided by R295, H327, and S379.

It belongs to the RuBisCO large chain family. Type I subfamily. In terms of assembly, heterohexadecamer of 8 large chains and 8 small chains; disulfide-linked. The disulfide link is formed within the large subunit homodimers. It depends on Mg(2+) as a cofactor. In terms of processing, the disulfide bond which can form in the large chain dimeric partners within the hexadecamer appears to be associated with oxidative stress and protein turnover.

The protein resides in the plastid. It is found in the chloroplast. It catalyses the reaction 2 (2R)-3-phosphoglycerate + 2 H(+) = D-ribulose 1,5-bisphosphate + CO2 + H2O. The enzyme catalyses D-ribulose 1,5-bisphosphate + O2 = 2-phosphoglycolate + (2R)-3-phosphoglycerate + 2 H(+). Its function is as follows. RuBisCO catalyzes two reactions: the carboxylation of D-ribulose 1,5-bisphosphate, the primary event in carbon dioxide fixation, as well as the oxidative fragmentation of the pentose substrate in the photorespiration process. Both reactions occur simultaneously and in competition at the same active site. The protein is Ribulose bisphosphate carboxylase large chain of Neurachne tenuifolia.